A 475-amino-acid chain; its full sequence is UDP-N-acetylmuramoylalanine--D-glutamate ligase (475 aa).

Residue 130-136 (GTNGKTT) coordinates ATP.

The protein belongs to the MurCDEF family.

The protein localises to the cytoplasm. The catalysed reaction is UDP-N-acetyl-alpha-D-muramoyl-L-alanine + D-glutamate + ATP = UDP-N-acetyl-alpha-D-muramoyl-L-alanyl-D-glutamate + ADP + phosphate + H(+). Its pathway is cell wall biogenesis; peptidoglycan biosynthesis. Functionally, cell wall formation. Catalyzes the addition of glutamate to the nucleotide precursor UDP-N-acetylmuramoyl-L-alanine (UMA). This chain is UDP-N-acetylmuramoylalanine--D-glutamate ligase, found in Corynebacterium diphtheriae (strain ATCC 700971 / NCTC 13129 / Biotype gravis).